Here is a 309-residue protein sequence, read N- to C-terminus: D-alanine--D-alanine ligase (309 aa).

The ATP-grasp domain maps to 106–305; that stretch reads KMLWKAFGLP…FEQLVVKILE (200 aa). Position 136–191 (136–191) interacts with ATP; it reads VEKLGLPVMVKPSLEGSSVGLTKVKRVEDLKSAVDFALKYDDTVLIEEWLSGAEFT. Residues aspartate 259, glutamate 272, and asparagine 274 each coordinate Mg(2+).

The protein belongs to the D-alanine--D-alanine ligase family. Requires Mg(2+) as cofactor. Mn(2+) serves as cofactor.

Its subcellular location is the cytoplasm. It catalyses the reaction 2 D-alanine + ATP = D-alanyl-D-alanine + ADP + phosphate + H(+). Its pathway is cell wall biogenesis; peptidoglycan biosynthesis. Its function is as follows. Cell wall formation. The chain is D-alanine--D-alanine ligase from Pasteurella multocida (strain Pm70).